Reading from the N-terminus, the 244-residue chain is Eukaryotic translation initiation factor 6 (244 aa).

It belongs to the eIF-6 family. As to quaternary structure, monomer. Associates with the 60S ribosomal subunit.

It localises to the cytoplasm. It is found in the nucleus. The protein localises to the nucleolus. In terms of biological role, binds to the 60S ribosomal subunit and prevents its association with the 40S ribosomal subunit to form the 80S initiation complex in the cytoplasm. May also be involved in ribosome biogenesis. The chain is Eukaryotic translation initiation factor 6 (eif6) from Dictyostelium discoideum (Social amoeba).